A 260-amino-acid polypeptide reads, in one-letter code: Activator of 90 kDa heat shock protein ATPase homolog 2 (260 aa).

The protein belongs to the AHA1 family.

Its function is as follows. Co-chaperone that stimulates HSP90 ATPase activity. The polypeptide is Activator of 90 kDa heat shock protein ATPase homolog 2 (AHSA2) (Bos taurus (Bovine)).